The following is a 218-amino-acid chain: Probable nicotinate-nucleotide adenylyltransferase (218 aa).

Belongs to the NadD family.

The catalysed reaction is nicotinate beta-D-ribonucleotide + ATP + H(+) = deamido-NAD(+) + diphosphate. It functions in the pathway cofactor biosynthesis; NAD(+) biosynthesis; deamido-NAD(+) from nicotinate D-ribonucleotide: step 1/1. Its function is as follows. Catalyzes the reversible adenylation of nicotinate mononucleotide (NaMN) to nicotinic acid adenine dinucleotide (NaAD). The chain is Probable nicotinate-nucleotide adenylyltransferase from Halorhodospira halophila (strain DSM 244 / SL1) (Ectothiorhodospira halophila (strain DSM 244 / SL1)).